We begin with the raw amino-acid sequence, 188 residues long: Peptide deformylase (188 aa).

Residues C94 and H136 each coordinate Fe cation. E137 is a catalytic residue. Residue H140 coordinates Fe cation.

Belongs to the polypeptide deformylase family. The cofactor is Fe(2+).

It carries out the reaction N-terminal N-formyl-L-methionyl-[peptide] + H2O = N-terminal L-methionyl-[peptide] + formate. Its function is as follows. Removes the formyl group from the N-terminal Met of newly synthesized proteins. Requires at least a dipeptide for an efficient rate of reaction. N-terminal L-methionine is a prerequisite for activity but the enzyme has broad specificity at other positions. This chain is Peptide deformylase, found in Pelodictyon phaeoclathratiforme (strain DSM 5477 / BU-1).